Reading from the N-terminus, the 219-residue chain is Probable GTP-binding protein EngB (219 aa).

Positions 33–217 constitute an EngB-type G domain; the sequence is GPLEIAFAGR…RAAICETVGH (185 aa). Residues 41–48, 68–72, 95–98, 162–165, and 196–198 each bind GTP; these read GRSNVGKS, GRTQE, DMPG, TKTD, and TSS. Serine 48 and threonine 70 together coordinate Mg(2+).

Belongs to the TRAFAC class TrmE-Era-EngA-EngB-Septin-like GTPase superfamily. EngB GTPase family. Mg(2+) serves as cofactor.

Its function is as follows. Necessary for normal cell division and for the maintenance of normal septation. The chain is Probable GTP-binding protein EngB from Allorhizobium ampelinum (strain ATCC BAA-846 / DSM 112012 / S4) (Agrobacterium vitis (strain S4)).